Consider the following 245-residue polypeptide: MKILISNDDGYLAPGLIALADALAPIADIVVVAPDSNRSGSSNSLTLDRPLSVYQASNGFYFINGTPSDCVHIALTGIMSFRPDLIVSGINQGQNMGDDTLYSGTVAAATEGHLFGIPAIAFSQLEKGWAELKSAARVARDIVERRFETLPENFLLNVNIPNLPYEQLKPAVATRLGRRHQSEAVIKAQDPHGRDIYWIGPSGGQKDAGEGTDFHATAQGHVSITPLQIDLTQNAQLAALKKVLA.

The a divalent metal cation site is built by Asp8, Asp9, Ser39, and Asn91.

The protein belongs to the SurE nucleotidase family. Requires a divalent metal cation as cofactor.

It is found in the cytoplasm. It catalyses the reaction a ribonucleoside 5'-phosphate + H2O = a ribonucleoside + phosphate. Nucleotidase that shows phosphatase activity on nucleoside 5'-monophosphates. The chain is 5'-nucleotidase SurE from Herminiimonas arsenicoxydans.